The chain runs to 451 residues: Sensor histidine kinase CssS (451 aa).

Residues 1–9 lie on the Cytoplasmic side of the membrane; the sequence is MKNKPLAFQ. A helical transmembrane segment spans residues 10 to 30; sequence IWVVISGILLAISILLLVLFS. At 31 to 165 the chain is on the extracellular side; sequence NTLRDFFTNE…RDDLAYTLFK (135 aa). Residues 166-186 form a helical membrane-spanning segment; it reads QLLFIIAVVILLSWIPAIWLA. In terms of domain architecture, HAMP spans 187-239; that stretch reads KYLSRPLVSFEKHVKRISEQDWDDPVKVDRKDEIGKLGHTIEEMRQKLVQKDE. Residues 187–451 lie on the Cytoplasmic side of the membrane; it reads KYLSRPLVSF…GVTYRIAVPK (265 aa). Positions 247-451 constitute a Histidine kinase domain; that stretch reads NISHDLKTPV…GVTYRIAVPK (205 aa). H250 is subject to Phosphohistidine; by autocatalysis.

The protein localises to the cell membrane. The catalysed reaction is ATP + protein L-histidine = ADP + protein N-phospho-L-histidine.. Member of the two-component regulatory system CssS/CssR required to control the cellular response to secretion stress. Required for the transcription of htrA. Could detect misfolded proteins at the membrane-cell wall interface and then activate CssR by phosphorylation. In Bacillus subtilis (strain 168), this protein is Sensor histidine kinase CssS (cssS).